The chain runs to 240 residues: Mitochondrial transcription rescue factor 1 (240 aa).

A mitochondrion-targeting transit peptide spans 1 to 84; the sequence is MAMASVKLLA…ECIFPFSVRL (84 aa). Positions 95–127 are disordered; that stretch reads KKSLQKVDEEDSDEESHHDEMSEQEEELEDDPT. 2 positions are modified to phosphoserine: serine 106 and serine 116. Over residues 116–126 the composition is skewed to acidic residues; sequence SEQEEELEDDP. Residues 142-217 enclose the S4 RNA-binding domain; it reads FRYDVVLKTG…LKKVFEEKTE (76 aa).

As to quaternary structure, monomer. Interacts with POLRMT. Interacts (via S4 domain) with MTRFR (via C-terminus). Associates with mitoribosomal S39 large subunit, peptidyl tRNA and nascent chain.

It is found in the mitochondrion matrix. In terms of biological role, mitochondrial RNA-binding protein involved in mitochondrial transcription regulation. Functions as a protective factor to maintain proper mitochondrial RNA level during stress. Acts at the transcription level and its protective function depends on its RNA binding ability. Part of a mitoribosome-associated quality control pathway that prevents aberrant translation by responding to interruptions during elongation. As heterodimer with MTRF, ejects the unfinished nascent chain and peptidyl transfer RNA (tRNA), respectively, from stalled ribosomes. Recruitment of mitoribosome biogenesis factors to these quality control intermediates suggests additional roles for MTRES1 and MTRF during mitoribosome rescue. In Homo sapiens (Human), this protein is Mitochondrial transcription rescue factor 1.